A 160-amino-acid polypeptide reads, in one-letter code: Heme transporter hrg-5 (160 aa).

The chain crosses the membrane as a helical span at residues 21–41 (IALTILDILIGFSNILSYAIQ). Asn44 carries an N-linked (GlcNAc...) asparagine glycan. The next 3 membrane-spanning stretches (helical) occupy residues 47–67 (ALTL…MFLA), 89–109 (ITLG…AGVT), and 123–142 (FTGL…ALLA). Asn144 carries an N-linked (GlcNAc...) asparagine glycan.

The protein belongs to the HRG family.

The protein localises to the membrane. In terms of biological role, heme transporter. This chain is Heme transporter hrg-5 (hrg-5), found in Caenorhabditis elegans.